The primary structure comprises 787 residues: MRFAYSWLMDHLDTEWSASAVADELSRLGIEAELLHEGQDPAPFVVARVGAVKPHPSADKLKVCEVFDGADHMQVVCGASNVREGMLSVLARCGAVMPNGGPTIVEAVLRGVKSHGMLCSADELGVQGWRAQDSGILDLPSSDYEVGDSFFLSGAVIEVGVTPNRGDCLGLRGIARELVAAGVGALRPLPVADLEVFGRSPIEAEMRSAGVLMGRYIKSIKNTGDSPRWIKDRLISAGVKTISCVVDIVNYVMLVLNRPMHVYDADKIQGGKLVVGASSNTDFHALDGKKYTLSKDNLVVTDGAGVVHCIAGVIGSALSGCTLDSENIFLESAWYDPVDIAMSARKLKLSTDSSCRFERFTDPGCVKLGLDFASHMIVKYCGGVASDVVACGETPFSEGRVISFNPDSVGVIGSVEIEREEILRILTALGFDVNADKDRQWEVSVPSWRLADVRSSFDVVEEVLRMHGYDKVQEQPVVPCIAGPNGCNYDEKLSLIMLSAGLTEVVTWSFMSGAVAEKLGYSIEDLCVENPVSNKFDVMRPSLLPNLLQTAASNQACGCESVAIFELGEVYRFLDESERSICGVRSGDNVPRNPHGATRKFDFFDAKCDVLQVLTQLGIDGRLVEFRSCDRSYMHPARSADVYFRDILCGYVGELHPDLIGFFEMRSAAACFEIFLSRIPNVDDNPTGDEFLVHKYQPVKRDFAFVLDQGVQSQALVDVVGCIPGVAEVSVFDFYCGDNIPEGKVSIAVAVVMISKVGTMTESEIKDVSERIIALVAQKLGGELRAD.

The tRNA-binding domain maps to glycine 38–phenylalanine 151. The 78-residue stretch at serine 397–glutamate 474 folds into the B5 domain. The Mg(2+) site is built by aspartate 452, aspartate 458, glutamate 461, and glutamate 462. An FDX-ACB domain is found at histidine 694–arginine 785.

This sequence belongs to the phenylalanyl-tRNA synthetase beta subunit family. Type 1 subfamily. As to quaternary structure, tetramer of two alpha and two beta subunits. Mg(2+) is required as a cofactor.

The protein localises to the cytoplasm. The catalysed reaction is tRNA(Phe) + L-phenylalanine + ATP = L-phenylalanyl-tRNA(Phe) + AMP + diphosphate + H(+). The sequence is that of Phenylalanine--tRNA ligase beta subunit from Anaplasma marginale (strain St. Maries).